Here is a 305-residue protein sequence, read N- to C-terminus: uncharacterized protein (305 aa).

A helical transmembrane segment spans residues 8 to 28 (IGALVTAVIAIGIVFSHMILF).

The protein localises to the membrane. This is an uncharacterized protein from Bacillus subtilis (strain 168).